Reading from the N-terminus, the 115-residue chain is Ribonuclease P protein component (115 aa).

This sequence belongs to the RnpA family. Consists of a catalytic RNA component (M1 or rnpB) and a protein subunit.

It carries out the reaction Endonucleolytic cleavage of RNA, removing 5'-extranucleotides from tRNA precursor.. Its function is as follows. RNaseP catalyzes the removal of the 5'-leader sequence from pre-tRNA to produce the mature 5'-terminus. It can also cleave other RNA substrates such as 4.5S RNA. The protein component plays an auxiliary but essential role in vivo by binding to the 5'-leader sequence and broadening the substrate specificity of the ribozyme. This Staphylococcus carnosus (strain TM300) protein is Ribonuclease P protein component.